Consider the following 455-residue polypeptide: EP1-like glycoprotein 1 (455 aa).

The N-terminal stretch at 1-22 is a signal peptide; it reads MLRFDYLLITALAISTVSVVMA. The region spanning 43–163 is the Bulb-type lectin domain; it reads TEYDASYRFL…HGKFVWQSFD (121 aa). N-linked (GlcNAc...) asparagine glycosylation is found at N106, N191, N211, N241, and N289. An S-nitrosocysteine modification is found at C374. A PAN domain is found at 374–455; the sequence is CSGGKGKAVN…NTSSVAYIKY (82 aa). 2 disulfides stabilise this stretch: C410-C432 and C414-C420. N-linked (GlcNAc...) asparagine glycosylation occurs at N446.

It localises to the secreted. It is found in the cell wall. In Arabidopsis thaliana (Mouse-ear cress), this protein is EP1-like glycoprotein 1.